The primary structure comprises 249 residues: Triosephosphate isomerase (249 aa).

9 to 11 (NWK) serves as a coordination point for substrate. The active-site Electrophile is His94. Glu166 (proton acceptor) is an active-site residue. Substrate contacts are provided by residues Gly172, Ser211, and 232–233 (GG).

It belongs to the triosephosphate isomerase family. As to quaternary structure, homodimer.

It localises to the cytoplasm. The catalysed reaction is D-glyceraldehyde 3-phosphate = dihydroxyacetone phosphate. It functions in the pathway carbohydrate biosynthesis; gluconeogenesis. Its pathway is carbohydrate degradation; glycolysis; D-glyceraldehyde 3-phosphate from glycerone phosphate: step 1/1. Functionally, involved in the gluconeogenesis. Catalyzes stereospecifically the conversion of dihydroxyacetone phosphate (DHAP) to D-glyceraldehyde-3-phosphate (G3P). The polypeptide is Triosephosphate isomerase (Moorella thermoacetica (strain ATCC 39073 / JCM 9320)).